The chain runs to 206 residues: Guanylate kinase (206 aa).

Residues 6 to 184 (GTLYIISAPS…ALDDLKAIFR (179 aa)) form the Guanylate kinase-like domain. 13–20 (APSGAGKS) serves as a coordination point for ATP.

Belongs to the guanylate kinase family.

Its subcellular location is the cytoplasm. The catalysed reaction is GMP + ATP = GDP + ADP. Its function is as follows. Essential for recycling GMP and indirectly, cGMP. The protein is Guanylate kinase of Pseudomonas fluorescens (strain Pf0-1).